Here is a 75-residue protein sequence, read N- to C-terminus: ATP synthase subunit c (75 aa).

2 consecutive transmembrane segments (helical) span residues 9–29 (IGAGLAAIGMIGSGIGVGNIW) and 52–72 (IGFAVTEAIALFALVVALILL).

It belongs to the ATPase C chain family. F-type ATPases have 2 components, F(1) - the catalytic core - and F(0) - the membrane proton channel. F(1) has five subunits: alpha(3), beta(3), gamma(1), delta(1), epsilon(1). F(0) has four main subunits: a(1), b(1), b'(1) and c(10-14). The alpha and beta chains form an alternating ring which encloses part of the gamma chain. F(1) is attached to F(0) by a central stalk formed by the gamma and epsilon chains, while a peripheral stalk is formed by the delta, b and b' chains.

It localises to the cell inner membrane. In terms of biological role, f(1)F(0) ATP synthase produces ATP from ADP in the presence of a proton or sodium gradient. F-type ATPases consist of two structural domains, F(1) containing the extramembraneous catalytic core and F(0) containing the membrane proton channel, linked together by a central stalk and a peripheral stalk. During catalysis, ATP synthesis in the catalytic domain of F(1) is coupled via a rotary mechanism of the central stalk subunits to proton translocation. Key component of the F(0) channel; it plays a direct role in translocation across the membrane. A homomeric c-ring of between 10-14 subunits forms the central stalk rotor element with the F(1) delta and epsilon subunits. This chain is ATP synthase subunit c, found in Rhodospirillum rubrum (strain ATCC 11170 / ATH 1.1.1 / DSM 467 / LMG 4362 / NCIMB 8255 / S1).